Reading from the N-terminus, the 296-residue chain is Bifunctional protein FolD (296 aa).

NADP(+) contacts are provided by residues 166–168 (GRS), serine 191, and isoleucine 232.

The protein belongs to the tetrahydrofolate dehydrogenase/cyclohydrolase family. Homodimer.

It catalyses the reaction (6R)-5,10-methylene-5,6,7,8-tetrahydrofolate + NADP(+) = (6R)-5,10-methenyltetrahydrofolate + NADPH. The catalysed reaction is (6R)-5,10-methenyltetrahydrofolate + H2O = (6R)-10-formyltetrahydrofolate + H(+). Its pathway is one-carbon metabolism; tetrahydrofolate interconversion. Its function is as follows. Catalyzes the oxidation of 5,10-methylenetetrahydrofolate to 5,10-methenyltetrahydrofolate and then the hydrolysis of 5,10-methenyltetrahydrofolate to 10-formyltetrahydrofolate. The sequence is that of Bifunctional protein FolD from Cereibacter sphaeroides (strain ATCC 17023 / DSM 158 / JCM 6121 / CCUG 31486 / LMG 2827 / NBRC 12203 / NCIMB 8253 / ATH 2.4.1.) (Rhodobacter sphaeroides).